The following is a 115-amino-acid chain: Salivary anti-complement protein (115 aa).

Residues M1 to C22 form the signal peptide. Cystine bridges form between C26/C108, C41/C92, and C83/C101.

As to quaternary structure, may form multimers. Salivary gland (at protein level).

It localises to the secreted. Functionally, salivary protein that inhibits the classical pathway of complement system activation in the host while having no inhibitory effect on the alternative or lectin pathways. Prevent cleavage of host C4 and consequently impairs the activation of factors downstream of C4b in the complement cascade. The protein is Salivary anti-complement protein of Lutzomyia longipalpis (Sand fly).